A 329-amino-acid polypeptide reads, in one-letter code: Endochitinase A (329 aa).

An N-terminal signal peptide occupies residues 1–23 (MRLCKFTALSSLLFSLLLLSASA). Residues 24 to 65 (EQCGSQAGGARCPSGLCCSKFGWCGNTNDYCGPGNCQSQCPG) enclose the Chitin-binding type-1 domain. 4 disulfides stabilise this stretch: C26-C41, C35-C47, C40-C54, and C59-C63. 4-hydroxyproline; partial is present on P67. 4-hydroxyproline occurs at positions 69, 71, 72, and 74. P75 bears the 4-hydroxyproline; partial mark. 3 disulfides stabilise this stretch: C101-C163, C175-C183, and C282-C314. E145 functions as the Proton donor in the catalytic mechanism. A propeptide spans 323–329 (GLLVDTM) (removed in mature form).

This sequence belongs to the glycosyl hydrolase 19 family. Chitinase class I subfamily. In terms of processing, the 4-hydroxyproline residues are not glycosylated in this plant vacuolar protein.

The protein localises to the vacuole. It carries out the reaction Random endo-hydrolysis of N-acetyl-beta-D-glucosaminide (1-&gt;4)-beta-linkages in chitin and chitodextrins.. Defense against chitin-containing fungal pathogens. The protein is Endochitinase A (CHN48) of Nicotiana tabacum (Common tobacco).